Consider the following 192-residue polypeptide: Adenylate kinase (192 aa).

10–18 (GVPGVGSTT) is a binding site for ATP.

This sequence belongs to the archaeal adenylate kinase family. As to quaternary structure, monomer.

Its subcellular location is the cytoplasm. The catalysed reaction is AMP + ATP = 2 ADP. The polypeptide is Adenylate kinase (adkA) (Methanocaldococcus jannaschii (strain ATCC 43067 / DSM 2661 / JAL-1 / JCM 10045 / NBRC 100440) (Methanococcus jannaschii)).